The following is a 236-amino-acid chain: Eukaryotic translation initiation factor 3 subunit K (236 aa).

Residues 48-218 form the PCI domain; that stretch reads CDCNANRTLL…EAKKAEIRED (171 aa).

The protein belongs to the eIF-3 subunit K family.

The protein localises to the cytoplasm. Its function is as follows. Component of the eukaryotic translation initiation factor 3 (eIF-3) complex, which is involved in protein synthesis of a specialized repertoire of mRNAs and, together with other initiation factors, stimulates binding of mRNA and methionyl-tRNAi to the 40S ribosome. The eIF-3 complex specifically targets and initiates translation of a subset of mRNAs involved in cell proliferation. The chain is Eukaryotic translation initiation factor 3 subunit K from Pyricularia oryzae (strain Y34) (Rice blast fungus).